Reading from the N-terminus, the 302-residue chain is MFRATLAICGRTVVKRQFISSVSGESALPPNLRLPPNLIGVAAEKRPPPSGSDLPVVRRCEADVPAHLTPAQTWLESLGSRDSDQLGVVDLHPDVFSVPIRLDILHAVEVWQRNFKRISYANVKTRAEVRGGGRKPWQQKRTGRARHGSIRSPLWRGGGIIHGPRGPTSYYYMLPMKVRVQGLKIALSAKLAQDYLHIVDSLEIPTPDPQYLQDLVKHRQWGDSVLIVDVGEEFPQNILKATEDLKTVNIIPALGLNVHSLLKHESLVLTLEAVKFLEKKLLWHDVRYTPLYPFKLPYSDLP.

The protein belongs to the universal ribosomal protein uL4 family. Component of the mitochondrial ribosome large subunit (39S) which comprises a 16S rRNA and about 50 distinct proteins.

The protein resides in the mitochondrion. The polypeptide is Large ribosomal subunit protein uL4m (mrpl4) (Danio rerio (Zebrafish)).